A 488-amino-acid polypeptide reads, in one-letter code: Spermatogenesis-associated protein 6 (488 aa).

A signal peptide spans 1-17 (MPKVKALQCALALEIRS). Positions 176-225 (HGRLQCRTSRSQKKKSKSPERSKYCINTKNYEQPTISSKSHSPSPYTKRR) are disordered. Over residues 200–220 (CINTKNYEQPTISSKSHSPSP) the composition is skewed to polar residues. Ser-217 and Ser-219 each carry phosphoserine. A Glycyl lysine isopeptide (Lys-Gly) (interchain with G-Cter in SUMO2) cross-link involves residue Lys-248. 9 positions are modified to phosphoserine: Ser-265, Ser-274, Ser-325, Ser-343, Ser-346, Ser-354, Ser-424, Ser-465, and Ser-487.

Belongs to the SPATA6 family. As to quaternary structure, interacts with MYL6. Specifically expressed in developing spermatids and mature spermatozoa (at protein level). Isoform 1 is weakly expressed in testis, ovary, thymus and placenta. Isoform 2 and isoform 3 are testis-specific. Expression isw higher in spermatids than in spermatocytes and spermatogonia.

Its subcellular location is the secreted. It is found in the cell projection. The protein localises to the cilium. It localises to the flagellum. Required for formation of the sperm connecting piece during spermiogenesis. Sperm connecting piece is essential for linking the developing flagellum to the head during late spermiogenesis. May be involved in myosin-based microfilament transport through interaction with myosin subunits. The chain is Spermatogenesis-associated protein 6 from Mus musculus (Mouse).